A 65-amino-acid polypeptide reads, in one-letter code: Large ribosomal subunit protein bL35 (65 aa).

The protein belongs to the bacterial ribosomal protein bL35 family.

The sequence is that of Large ribosomal subunit protein bL35 from Caldicellulosiruptor saccharolyticus (strain ATCC 43494 / DSM 8903 / Tp8T 6331).